A 203-amino-acid chain; its full sequence is Akirin-2 (203 aa).

Ser-18 and Ser-21 each carry phosphoserine. The short motif at 22-27 (PKRRRC) is the Nuclear localization signal element. At Ser-57 the chain carries Phosphoserine. The SYVS motif signature appears at 200 to 203 (SYVS).

It belongs to the akirin family. As to quaternary structure, homodimer. Interacts with IPO9; the interaction is direct. Associates with 20S and 26S proteasomes. Interacts with SMARCD1; promoting SWI/SNF complex recruitment. Interacts with NFKBIZ. Interacts with YWHAB. In terms of processing, polyubiquitinated. Polyubiquitination is dependent of UBR5 that extends pre-ubiquitinated AKIRIN2. As to expression, widely expressed. Most abundant in the lung, followed by the skeletal muscle, heart, liver, fat, thymus, lymph node, small intestine, kidney and spleen. In skeletal muscle, expressed at higher level in fast extensor digitorum longus (EDL) and longissimus lumborum (LL) muscles than in slow soleus (SOL) muscles.

Its subcellular location is the nucleus. The protein resides in the cytoplasm. It is found in the membrane. Molecular adapter that acts as a bridge between a variety of multiprotein complexes, and which is involved in embryonic development, immunity, myogenesis and brain development. Plays a key role in nuclear protein degradation by promoting import of proteasomes into the nucleus: directly binds to fully assembled 20S proteasomes at one end and to nuclear import receptor IPO9 at the other end, bridging them together and mediating the import of pre-assembled proteasome complexes through the nuclear pore. Involved in innate immunity by regulating the production of interleukin-6 (IL6) downstream of Toll-like receptor (TLR): acts by bridging the NF-kappa-B inhibitor NFKBIZ and the SWI/SNF complex, leading to promote induction of IL6. Also involved in adaptive immunity by promoting B-cell activation. Involved in brain development: required for the survival and proliferation of cerebral cortical progenitor cells. Involved in myogenesis: required for skeletal muscle formation and skeletal development, possibly by regulating expression of muscle differentiation factors. The chain is Akirin-2 from Sus scrofa (Pig).